Reading from the N-terminus, the 774-residue chain is Two pore channel protein 2 (774 aa).

The Cytoplasmic portion of the chain corresponds to 1 to 92; that stretch reads MEEEPLLAGS…GSLRLYRWYY (92 aa). The chain crosses the membrane as a helical span at residues 93–113; sequence SNLCQWGLGLTIAVVLALAFI. The Extracellular segment spans residues 114–140; the sequence is ERPSSLTYTSDIRVKPKPWEPPCGMTE. A helical transmembrane segment spans residues 141–161; it reads GIEIVCLCIFILDVTAKGYLI. Topologically, residues 162–170 are cytoplasmic; the sequence is GWEEFRMNK. Residues 171-191 form a helical membrane-spanning segment; it reads WLLAYLIVITASVIDWMLSIS. Residues 192–197 are Extracellular-facing; sequence MLCDEN. A helical transmembrane segment spans residues 198-218; it reads LRVRRLIRPFFLLQNSSLMKK. Residues 217–221 form an interaction with phosphatidylinositol 3,5-bisphosphate region; that stretch reads KKTLK. The Cytoplasmic portion of the chain corresponds to 219-232; that stretch reads TLKCIKRTLPEIAS. Residues 233 to 253 traverse the membrane as a helical segment; that stretch reads VILLLALHICLFTMIGMLIFA. Over 254–267 the chain is Extracellular; the sequence is KSDDPKQNGEWQTY. The segment at residues 268–292 is an intramembrane region (helical; Pore-forming); the sequence is FRNLPKALSSLLVLLTTANNPDVMI. Residues 293–302 are Extracellular-facing; it reads PAYSLNRGYS. Residues 303 to 323 form a helical membrane-spanning segment; sequence IFFILFSVFGTYLLMNLMTAI. Residues 324-452 lie on the Cytoplasmic side of the membrane; the sequence is IYNQFRGYLL…YVYSHYYISV (129 aa). A helical transmembrane segment spans residues 453–475; the sequence is LGNAVALANVICICTVLVLNAEK. Over 476 to 486 the chain is Extracellular; sequence SASEKNYFYME. The helical transmembrane segment at 487–507 threads the bilayer; that stretch reads IINCIFILYYLIEMLLKIVAF. The Cytoplasmic segment spans residues 508-518; that stretch reads GWKGYLSYRNN. A helical membrane pass occupies residues 519-539; that stretch reads IFDGFLTVLLLAIQIVIFITF. At 540–564 the chain is on the extracellular side; the sequence is KIPYVDVDPVPRHVMALWEMIRLVN. A helical membrane pass occupies residues 565–585; it reads MLIVFRFLRIIPEIKLMAVVA. At 586–596 the chain is on the cytoplasmic side; sequence STIVDLVKNLR. Residues 597-617 form a helical membrane-spanning segment; the sequence is AFAGILLVVYYMFAVLGIWLF. Residues 618–658 are Extracellular-facing; sequence QGAISPPSNMSLVSNSSLENITGPYSMECGTFEQLEYWPNN. Asn626, Asn632, and Asn637 each carry an N-linked (GlcNAc...) asparagine glycan. The helical; Pore-forming intramembrane region spans 659-681; it reads FDDFASSLILLYNIMVVNNWHVF. Residues 682-696 lie on the Extracellular side of the membrane; it reads TDAYARYTTDWSLVY. The helical transmembrane segment at 697–717 threads the bilayer; it reads FVVWWLTSSVMWVNLFVALIL. Residues 718 to 774 lie on the Cytoplasmic side of the membrane; the sequence is ENFTYKWDRSNGLSVEDVERIAYQSTVQLMFKEHVKEPTEEELLAQLHQHPHLHLSW.

This sequence belongs to the calcium channel alpha-1 subunit (TC 1.A.1.11) family. Two pore calcium channel subfamily. In terms of assembly, homodimer. In terms of processing, N-glycosylated.

The protein localises to the late endosome membrane. Its subcellular location is the lysosome membrane. It catalyses the reaction Na(+)(in) = Na(+)(out). The catalysed reaction is Ca(2+)(in) = Ca(2+)(out). Its function is as follows. Intracellular channel initially characterized as a non-selective Ca(2+)-permeable channel activated by NAADP (nicotinic acid adenine dinucleotide phosphate), it is also a highly-selective Na(+) channel activated directly by PI(3,5)P2 (phosphatidylinositol 3,5-bisphosphate). Localizes to the lysosomal and late endosome membranes where it regulates organellar membrane excitability, membrane trafficking, and pH homeostasis. The sequence is that of Two pore channel protein 2 (tpcn2) from Danio rerio (Zebrafish).